The following is a 595-amino-acid chain: Indole-3-acetic acid-amido synthetase GH3.3 (595 aa).

It belongs to the IAA-amido conjugating enzyme family.

Functionally, catalyzes the synthesis of indole-3-acetic acid (IAA)-amino acid conjugates, providing a mechanism for the plant to cope with the presence of excess auxin. Strongly reactive with Glu, Gln, Trp, Asp, Ala, Leu, Phe, Gly, Tyr, Met, Ile and Val. Little or no product formation with His, Ser, Thr, Arg, Lys, or Cys. Also active on pyruvic and butyric acid analogs of IAA, PAA and the synthetic auxin naphthaleneacetic acid (NAA). The two chlorinated synthetic auxin herbicides 2,4-D and 3,6-dichloro-o-anisic acid (dicamba) cannot be used as substrates. This chain is Indole-3-acetic acid-amido synthetase GH3.3 (GH3.3), found in Arabidopsis thaliana (Mouse-ear cress).